The sequence spans 89 residues: Small ribosomal subunit protein bS20 (89 aa).

Residues 68–89 (PNKGARKSSRLDHFVNEQKSKQ) are disordered. A compositionally biased stretch (basic and acidic residues) spans 76–89 (SRLDHFVNEQKSKQ).

The protein belongs to the bacterial ribosomal protein bS20 family.

In terms of biological role, binds directly to 16S ribosomal RNA. The chain is Small ribosomal subunit protein bS20 from Mycoplasmopsis agalactiae (strain NCTC 10123 / CIP 59.7 / PG2) (Mycoplasma agalactiae).